A 452-amino-acid chain; its full sequence is Bifunctional F420 biosynthesis protein FbiB (452 aa).

Positions M1 to G248 are coenzyme F420:L-glutamate ligase. Residues L24–F27, S54, and K59 each bind GTP. D113 is a binding site for a divalent metal cation. N116 is a GTP binding site. 2 residues coordinate a divalent metal cation: D154 and T155. The tract at residues T249–R452 is dehydro-coenzyme F420-0 reductase. FMN-binding positions include R264 to R268 and A292. D324 contributes to the coenzyme F420-(gamma-Glu)n binding site. FMN-binding residues include G403 and R440.

The protein in the N-terminal section; belongs to the CofE family. Mg(2+) serves as cofactor. Mn(2+) is required as a cofactor. It depends on K(+) as a cofactor.

The enzyme catalyses oxidized coenzyme F420-0 + GTP + L-glutamate = oxidized coenzyme F420-1 + GDP + phosphate + H(+). The catalysed reaction is oxidized coenzyme F420-0 + FMN + H(+) = dehydro coenzyme F420-0 + FMNH2. It catalyses the reaction oxidized coenzyme F420-1 + GTP + L-glutamate = oxidized coenzyme F420-2 + GDP + phosphate + H(+). Its pathway is cofactor biosynthesis; coenzyme F420 biosynthesis. In terms of biological role, bifunctional enzyme that catalyzes the GTP-dependent successive addition of two or more gamma-linked L-glutamates to the L-lactyl phosphodiester of 7,8-didemethyl-8-hydroxy-5-deazariboflavin (F420-0) to form polyglutamated F420 derivatives, and the FMNH2-dependent reduction of dehydro-F420-0 to form F420-0. The polypeptide is Bifunctional F420 biosynthesis protein FbiB (Nocardia farcinica (strain IFM 10152)).